Consider the following 228-residue polypeptide: 2-C-methyl-D-erythritol 4-phosphate cytidylyltransferase (228 aa).

The protein belongs to the IspD/TarI cytidylyltransferase family. IspD subfamily.

It carries out the reaction 2-C-methyl-D-erythritol 4-phosphate + CTP + H(+) = 4-CDP-2-C-methyl-D-erythritol + diphosphate. It functions in the pathway isoprenoid biosynthesis; isopentenyl diphosphate biosynthesis via DXP pathway; isopentenyl diphosphate from 1-deoxy-D-xylulose 5-phosphate: step 2/6. Catalyzes the formation of 4-diphosphocytidyl-2-C-methyl-D-erythritol from CTP and 2-C-methyl-D-erythritol 4-phosphate (MEP). This chain is 2-C-methyl-D-erythritol 4-phosphate cytidylyltransferase, found in Geobacillus kaustophilus (strain HTA426).